Consider the following 156-residue polypeptide: Snaclec A4 (156 aa).

The signal sequence occupies residues 1–23 (MGRSISVSFGLLVVFLSLSGTGA). The cysteines at positions 27 and 38 are disulfide-linked. In terms of domain architecture, C-type lectin spans 34–155 (HEGHCYKVFN…CGQPYRFTCE (122 aa)). Asparagine 45 carries N-linked (GlcNAc...) asparagine glycosylation. Intrachain disulfides connect cysteine 55–cysteine 154 and cysteine 129–cysteine 146.

It belongs to the snaclec family. As to quaternary structure, heterodimer; disulfide-linked. In terms of tissue distribution, expressed by the venom gland.

It is found in the secreted. Interferes with one step of hemostasis (modulation of platelet aggregation, or coagulation cascade, for example). In Macrovipera lebetinus (Levantine viper), this protein is Snaclec A4.